The sequence spans 571 residues: uncharacterized protein (571 aa).

Residues 1 to 25 are disordered; it reads MAPSVATSLKAEILPSPRTSSPSSN. One can recognise an FAD-binding FR-type domain in the interval 135–389; it reads FSVFPAPILD…RGLHKNAFAT (255 aa). The tract at residues 447–479 is disordered; the sequence is NPLQKSSDDDASSTVSQQTETEMDSFEVKKDGT.

It belongs to the flavoprotein pyridine nucleotide cytochrome reductase family. It depends on FAD as a cofactor.

This is an uncharacterized protein from Schizosaccharomyces pombe (strain 972 / ATCC 24843) (Fission yeast).